A 305-amino-acid polypeptide reads, in one-letter code: Homoserine O-acetyltransferase (305 aa).

Catalysis depends on Cys-142, which acts as the Acyl-thioester intermediate. 2 residues coordinate substrate: Lys-163 and Ser-192. His-235 (proton acceptor) is an active-site residue. The active site involves Glu-237. Arg-249 contributes to the substrate binding site.

The protein belongs to the MetA family.

It localises to the cytoplasm. It catalyses the reaction L-homoserine + acetyl-CoA = O-acetyl-L-homoserine + CoA. It functions in the pathway amino-acid biosynthesis; L-methionine biosynthesis via de novo pathway; O-acetyl-L-homoserine from L-homoserine: step 1/1. Transfers an acetyl group from acetyl-CoA to L-homoserine, forming acetyl-L-homoserine. The sequence is that of Homoserine O-acetyltransferase from Acetivibrio thermocellus (strain ATCC 27405 / DSM 1237 / JCM 9322 / NBRC 103400 / NCIMB 10682 / NRRL B-4536 / VPI 7372) (Clostridium thermocellum).